Reading from the N-terminus, the 226-residue chain is Urease accessory protein UreF (226 aa).

It belongs to the UreF family. As to quaternary structure, ureD, UreF and UreG form a complex that acts as a GTP-hydrolysis-dependent molecular chaperone, activating the urease apoprotein by helping to assemble the nickel containing metallocenter of UreC. The UreE protein probably delivers the nickel.

It localises to the cytoplasm. Functionally, required for maturation of urease via the functional incorporation of the urease nickel metallocenter. This Paraburkholderia xenovorans (strain LB400) protein is Urease accessory protein UreF.